A 394-amino-acid polypeptide reads, in one-letter code: Upstream-binding factor 1-like protein 1 (394 aa).

The segment at residues 101-169 is a DNA-binding region (HMG box 1); sequence PKRPLTAYLR…DFQKKMRQFK (69 aa). The segment covering 167-180 has biased composition (basic residues); sequence QFKKRHPVSGHPKK. Residues 167–197 are disordered; the sequence is QFKKRHPVSGHPKKSVVPQSHPTKVPTKSQG. A compositionally biased stretch (polar residues) spans 183–197; sequence VPQSHPTKVPTKSQG. The HMG box 2 DNA-binding region spans 225-291; it reads RKPPMNAYHK…QYRVKLDLWL (67 aa). The segment at 305–394 is disordered; it reads AKATCGKRKN…SDSSSTDEDD (90 aa).

The protein resides in the cytoplasm. It is found in the nucleus. Functionally, essential for proliferation of the inner cell mass and trophectodermal cells in peri-implantation development. The sequence is that of Upstream-binding factor 1-like protein 1 from Mus musculus (Mouse).